The sequence spans 303 residues: Acetylglutamate kinase (303 aa).

Substrate contacts are provided by residues 73–74 (GG), arginine 95, and asparagine 194.

The protein belongs to the acetylglutamate kinase family. ArgB subfamily.

It localises to the cytoplasm. It carries out the reaction N-acetyl-L-glutamate + ATP = N-acetyl-L-glutamyl 5-phosphate + ADP. It functions in the pathway amino-acid biosynthesis; L-arginine biosynthesis; N(2)-acetyl-L-ornithine from L-glutamate: step 2/4. In terms of biological role, catalyzes the ATP-dependent phosphorylation of N-acetyl-L-glutamate. This Saccharopolyspora erythraea (strain ATCC 11635 / DSM 40517 / JCM 4748 / NBRC 13426 / NCIMB 8594 / NRRL 2338) protein is Acetylglutamate kinase.